A 165-amino-acid polypeptide reads, in one-letter code: PTS system glucose-specific EIIA component (165 aa).

Residues 33–137 (DPVFAGRMMG…STITPIVITN (105 aa)) form the PTS EIIA type-1 domain. Zn(2+)-binding residues include H70 and H85. H85 acts as the Tele-phosphohistidine intermediate; for EIIA activity in catalysis. H85 bears the Phosphohistidine; by HPr mark.

In terms of assembly, heterodimer with glycerol kinase (glpk). It depends on Zn(2+) as a cofactor.

It is found in the cytoplasm. Its function is as follows. The phosphoenolpyruvate-dependent sugar phosphotransferase system (sugar PTS), a major carbohydrate active transport system, catalyzes the phosphorylation of incoming sugar substrates concomitantly with their translocation across the cell membrane. The enzyme II complex composed of PtsG and Crr is involved in glucose transport. The chain is PTS system glucose-specific EIIA component (crr) from Bacillus cereus (strain ATCC 14579 / DSM 31 / CCUG 7414 / JCM 2152 / NBRC 15305 / NCIMB 9373 / NCTC 2599 / NRRL B-3711).